We begin with the raw amino-acid sequence, 60 residues long: Mastoparan-B (60 aa).

A signal peptide spans 1-27 (MKNTILILFTAFIALLGFFGMSAEALA). AXPX repeat units follow at residues 27–30 (ADPL), 31–34 (AEPL), 35–38 (ADPN), and 41–44 (ADPE). The propeptide occupies 28 to 45 (DPLAEPLADPNAEADPEA). At Leu59 the chain carries Leucine amide.

It belongs to the MCD family. Mastoparan subfamily. Expressed by the venom gland.

It is found in the secreted. It localises to the target cell membrane. In terms of biological role, antimicrobial and mast cell degranulating peptide. Has broad spectrum antibacterial activity against both Gram-positive (S.aureus MIC=96-128 ug/ml, S.xylosus MIC=2 ug/ml, S.alactolyticus MIC=32 ug/ml, and S.choleraesuis MIC=32 ug/ml) and Gram-negative bacteria (C.koseri MIC=6 ug/ml, E.coli MIC=3-16 ug/ml, K.pneumoniae MIC=128 ug/ml, P.aerugiosa MIC=128 ug/ml, S.typhimurium MIC=64 ug/ml, V.parahamelytics MIC=32 ug/ml, and S.enterica), as well as on fungi (C.albicans, C.glabrata, and C.neoformans). Does not show antimicrobial activity against S.mutans. Affects membrane permeability of E.coli. Also acts as a mast cell degranulating peptide, that causes liberation of histamine from rat peritoneal mast cells. Its mast cell degranulation activity may be related to the activation of G-protein coupled receptors in mast cells as well as interaction with other proteins located in cell endosomal membranes in the mast cells. Whether this peptide shows hemolytic activities is controversial, as Lin et al., 2011 and Ho et al., 1991 found a hemolytic activity on sheep, chicken and human erythrocytes, whereas Kim et al., 2016 found no hemolytic activity on human erythrocytes. In vivo, induces edema in the rat paw. The sequence is that of Mastoparan-B from Vespa basalis (Hornet).